The primary structure comprises 89 residues: Small ribosomal subunit protein uS15 (89 aa).

It belongs to the universal ribosomal protein uS15 family. In terms of assembly, part of the 30S ribosomal subunit. Forms a bridge to the 50S subunit in the 70S ribosome, contacting the 23S rRNA.

In terms of biological role, one of the primary rRNA binding proteins, it binds directly to 16S rRNA where it helps nucleate assembly of the platform of the 30S subunit by binding and bridging several RNA helices of the 16S rRNA. Functionally, forms an intersubunit bridge (bridge B4) with the 23S rRNA of the 50S subunit in the ribosome. The polypeptide is Small ribosomal subunit protein uS15 (Thermosynechococcus vestitus (strain NIES-2133 / IAM M-273 / BP-1)).